The chain runs to 227 residues: Lectin (227 aa).

Residues 1-28 (MTMTSTTTKAMAMAAAVLAAAAVAATNA) form the signal peptide. Pyrrolidone carboxylic acid is present on Gln-29. 4 consecutive Chitin-binding type-1 domains span residues 29–70 (QTCG…ACCS), 71–113 (SQRC…PCRA), 114–156 (DIKC…ACCP), and 157–199 (EKRC…GCYK). Intrachain disulfides connect Cys-31–Cys-46, Cys-40–Cys-52, Cys-45–Cys-59, Cys-63–Cys-68, Cys-74–Cys-89, Cys-83–Cys-95, Cys-88–Cys-102, Cys-106–Cys-111, Cys-117–Cys-132, Cys-126–Cys-138, Cys-131–Cys-145, Cys-149–Cys-154, Cys-160–Cys-175, Cys-169–Cys-181, Cys-174–Cys-188, and Cys-192–Cys-197. 38 to 40 (MIC) is a substrate binding site. 90 to 101 (SQYGYCGFGSEY) is a substrate binding site. 142–143 (SE) provides a ligand contact to substrate. Positions 202 to 227 (DGMAAILANNQSVSFEGIIESVAELV) are excised as a propeptide. The N-linked (GlcNAc...) asparagine glycan is linked to Asn-211.

In terms of biological role, N-acetyl-D-glucosamine binding lectin. This Oryza sativa subsp. indica (Rice) protein is Lectin.